Reading from the N-terminus, the 20-residue chain is Cytochrome P450 3A5 (20 aa).

Belongs to the cytochrome P450 family. It depends on heme as a cofactor.

Its subcellular location is the endoplasmic reticulum membrane. It is found in the microsome membrane. The enzyme catalyses an organic molecule + reduced [NADPH--hemoprotein reductase] + O2 = an alcohol + oxidized [NADPH--hemoprotein reductase] + H2O + H(+). Its function is as follows. 6-beta-testosterone hydroxylase. This Papio sp. (Baboon) protein is Cytochrome P450 3A5.